The primary structure comprises 301 residues: Runt-related transcription factor rnt-1 (301 aa).

One can recognise a Runt domain in the interval 10–138; it reads NFIEQQPAPA…TVDGPRDARI (129 aa). 3 interaction with DNA regions span residues 40-44, 95-103, and 128-137; these read RSNKS, RFVGRSGRG, and VTVDGPRDAR. 2 residues coordinate chloride: Arg99 and Val130. A disordered region spans residues 237–301; that stretch reads PSIFITPTSD…SSSPTIWRPF (65 aa). Phosphoserine is present on Ser255. The segment covering 255 to 276 has biased composition (polar residues); the sequence is SPRSITKSSETSINLIQETPES. A compositionally biased stretch (low complexity) spans 285–301; sequence VSITSSNSSSPTIWRPF.

Interacts with CBFbeta homolog bro-1; acts to increase the affinity and specificity of interaction of rnt-1 with DNA. Interacts with TGF-beta pathway protein sma-4. In terms of processing, may be ubiquitinated in order to be targeted for proteasome-mediated degradation in intestinal cells. Post-translationally, may be phosphorylated by members of the p38 MAP kinase pathway. As to expression, expressed in the intestine.

It is found in the nucleus. In terms of biological role, transcription factor. Binds to regulatory DNA sequences in order to modulate transcription; negatively autoregulates its own expression, perhaps dependent upon CBF beta homolog bro-1. Promotes proliferation, and prevents differentiation, of seam cells, a stem cell-like lineage, acting in concert with bro-1. Required for controlling cell proliferation in the seam cells, perhaps by repressing expression of cyclin-dependent kinase inhibitor cki-1. Inhibition of seam cell differentiation is regulated by rnt-1 and bro-1, perhaps acting upstream of pop-1, by antagonizing pop-1 repressor function. Required for asymmetrical cell divisions in the lineage derived from a posterior embryonic seam cell, the T blast cell, and for asymmetric expression of zinc finger protein tlp-1. Regulates growth and male tail development. Involved in the oxidative stress response, perhaps downstream of the p38 MAP kinase pathway, and acting as part of a negative feedback loop via a transcriptional target gene, tyrosine-protein phosphatase vhp-1. Positively modulates dopaminergic signaling in a non-cell autonomous manner. May be involved in TGF-beta signaling. The protein is Runt-related transcription factor rnt-1 of Caenorhabditis elegans.